The primary structure comprises 278 residues: Bifunctional protein FolD (278 aa).

NADP(+) contacts are provided by residues 162–164 (GAG) and Ile-228.

It belongs to the tetrahydrofolate dehydrogenase/cyclohydrolase family. Homodimer.

The enzyme catalyses (6R)-5,10-methylene-5,6,7,8-tetrahydrofolate + NADP(+) = (6R)-5,10-methenyltetrahydrofolate + NADPH. It carries out the reaction (6R)-5,10-methenyltetrahydrofolate + H2O = (6R)-10-formyltetrahydrofolate + H(+). It functions in the pathway one-carbon metabolism; tetrahydrofolate interconversion. Functionally, catalyzes the oxidation of 5,10-methylenetetrahydrofolate to 5,10-methenyltetrahydrofolate and then the hydrolysis of 5,10-methenyltetrahydrofolate to 10-formyltetrahydrofolate. In Hydrogenobaculum sp. (strain Y04AAS1), this protein is Bifunctional protein FolD.